We begin with the raw amino-acid sequence, 331 residues long: Anthranilate phosphoribosyltransferase (331 aa).

5-phospho-alpha-D-ribose 1-diphosphate is bound by residues Gly79, 82–83 (GD), Thr87, 89–92 (NIST), 107–115 (KHGNYGATS), and Ala119. Gly79 lines the anthranilate pocket. Ser91 lines the Mg(2+) pocket. Asn110 contributes to the anthranilate binding site. Arg165 serves as a coordination point for anthranilate. Asp223 and Glu224 together coordinate Mg(2+).

Belongs to the anthranilate phosphoribosyltransferase family. In terms of assembly, homodimer. It depends on Mg(2+) as a cofactor.

It catalyses the reaction N-(5-phospho-beta-D-ribosyl)anthranilate + diphosphate = 5-phospho-alpha-D-ribose 1-diphosphate + anthranilate. Its pathway is amino-acid biosynthesis; L-tryptophan biosynthesis; L-tryptophan from chorismate: step 2/5. Functionally, catalyzes the transfer of the phosphoribosyl group of 5-phosphorylribose-1-pyrophosphate (PRPP) to anthranilate to yield N-(5'-phosphoribosyl)-anthranilate (PRA). This chain is Anthranilate phosphoribosyltransferase, found in Bacteroides fragilis (strain YCH46).